The sequence spans 267 residues: 5'-nucleotidase SurE (267 aa).

4 residues coordinate a divalent metal cation: Asp9, Asp10, Ser40, and Asn97.

The protein belongs to the SurE nucleotidase family. Requires a divalent metal cation as cofactor.

Its subcellular location is the cytoplasm. The catalysed reaction is a ribonucleoside 5'-phosphate + H2O = a ribonucleoside + phosphate. Its function is as follows. Nucleotidase that shows phosphatase activity on nucleoside 5'-monophosphates. In Helicobacter pylori (strain Shi470), this protein is 5'-nucleotidase SurE.